The chain runs to 159 residues: Phosphopantetheine adenylyltransferase (159 aa).

T10 lines the substrate pocket. ATP is bound by residues 10–11 (TF) and H18. Substrate is bound by residues K42, L74, and R88. ATP contacts are provided by residues 89–91 (GMR), E99, and 124–130 (WSYVSST).

Belongs to the bacterial CoaD family. In terms of assembly, homohexamer. It depends on Mg(2+) as a cofactor.

It is found in the cytoplasm. It catalyses the reaction (R)-4'-phosphopantetheine + ATP + H(+) = 3'-dephospho-CoA + diphosphate. It participates in cofactor biosynthesis; coenzyme A biosynthesis; CoA from (R)-pantothenate: step 4/5. Functionally, reversibly transfers an adenylyl group from ATP to 4'-phosphopantetheine, yielding dephospho-CoA (dPCoA) and pyrophosphate. In Mannheimia succiniciproducens (strain KCTC 0769BP / MBEL55E), this protein is Phosphopantetheine adenylyltransferase.